The sequence spans 135 residues: Probable transcription factor At2g20613 (135 aa).

Positions M1–A104 are disordered. Acidic residues predominate over residues D28–S41. Positions K62 to E80 are enriched in basic and acidic residues.

This sequence belongs to the GeBP family.

The chain is Probable transcription factor At2g20613 from Arabidopsis thaliana (Mouse-ear cress).